Here is a 427-residue protein sequence, read N- to C-terminus: Adenylosuccinate synthetase (427 aa).

Residues 12–18 and 40–42 each bind GTP; these read GDEGKGK and GHT. Catalysis depends on Asp-13, which acts as the Proton acceptor. Asp-13 and Gly-40 together coordinate Mg(2+). IMP is bound by residues 13–16, 38–41, Thr-128, Arg-142, Gln-223, Thr-238, and Arg-302; these read DEGK and NAGH. The active-site Proton donor is His-41. Residue 298–304 coordinates substrate; the sequence is TTTGRPR. Residues Arg-304, 330-332, and 412-414 contribute to the GTP site; these read SID and SVG.

Belongs to the adenylosuccinate synthetase family. Homodimer. The cofactor is Mg(2+).

It localises to the cytoplasm. The enzyme catalyses IMP + L-aspartate + GTP = N(6)-(1,2-dicarboxyethyl)-AMP + GDP + phosphate + 2 H(+). The protein operates within purine metabolism; AMP biosynthesis via de novo pathway; AMP from IMP: step 1/2. Plays an important role in the de novo pathway of purine nucleotide biosynthesis. Catalyzes the first committed step in the biosynthesis of AMP from IMP. This Staphylococcus saprophyticus subsp. saprophyticus (strain ATCC 15305 / DSM 20229 / NCIMB 8711 / NCTC 7292 / S-41) protein is Adenylosuccinate synthetase.